The sequence spans 161 residues: Endoribonuclease YbeY (161 aa).

Zn(2+) contacts are provided by His121, His125, and His131.

The protein belongs to the endoribonuclease YbeY family. Requires Zn(2+) as cofactor.

Its subcellular location is the cytoplasm. Functionally, single strand-specific metallo-endoribonuclease involved in late-stage 70S ribosome quality control and in maturation of the 3' terminus of the 16S rRNA. In Xylella fastidiosa (strain 9a5c), this protein is Endoribonuclease YbeY.